The primary structure comprises 740 residues: NAD(P)H-quinone oxidoreductase subunit 5, chloroplastic (740 aa).

Helical transmembrane passes span 9–29 (WIIPFIPLPVPMLIGAGLILF), 40–60 (WAFQSVLLLSIVMIFSIYLSI), 89–109 (IDPLTSIMSILITTVGIMVLI), 125–145 (FAYMSFFSTSMLGLVTSSNLI), 147–167 (IYIFWELVGLCSYLLIGFWFT), 185–205 (GDFGLLLGILGFYWITGSFEF), 219–239 (NEVNFLFVTLCAVLLFAGAVA), 258–278 (TPISALIHAATMVAAGIFLVA), 286–306 (VIPYIMYLISVIGIITVLLGA), 327–347 (LGYMMLALGMGSYRSALFHLI), 354–374 (ALLFLGSGSIIHSMETIVGYS), 396–416 (ITFLLGTLSLCGIPPLACFWS), 425–445 (WLYSPIFAIIAWATAGLTAFY), 543–563 (LFPIFVLGLFTLFVGSIGIPF), 602–622 (VLSVSIAYFGIFLASFLYKPI), and 718–738 (YLFLYLAYVSVFLLVYYLFFL).

The protein belongs to the complex I subunit 5 family. As to quaternary structure, NDH is composed of at least 16 different subunits, 5 of which are encoded in the nucleus.

The protein localises to the plastid. It localises to the chloroplast thylakoid membrane. The enzyme catalyses a plastoquinone + NADH + (n+1) H(+)(in) = a plastoquinol + NAD(+) + n H(+)(out). The catalysed reaction is a plastoquinone + NADPH + (n+1) H(+)(in) = a plastoquinol + NADP(+) + n H(+)(out). Its function is as follows. NDH shuttles electrons from NAD(P)H:plastoquinone, via FMN and iron-sulfur (Fe-S) centers, to quinones in the photosynthetic chain and possibly in a chloroplast respiratory chain. The immediate electron acceptor for the enzyme in this species is believed to be plastoquinone. Couples the redox reaction to proton translocation, and thus conserves the redox energy in a proton gradient. The protein is NAD(P)H-quinone oxidoreductase subunit 5, chloroplastic (ndhF) of Atropa belladonna (Belladonna).